Reading from the N-terminus, the 462-residue chain is uncharacterized protein (462 aa).

The TRAM domain maps to 12–70; it reads MLKKNDIIQVAISDLSHEGAGVAKHDGFVFFVDNALPEEVIDMRVLKVNKNSGFGKVEA. Residues Gln294, Tyr323, Glu344, and Asp392 each contribute to the S-adenosyl-L-methionine site. Cys419 functions as the Nucleophile in the catalytic mechanism.

It belongs to the class I-like SAM-binding methyltransferase superfamily. RNA M5U methyltransferase family.

This is an uncharacterized protein from Streptococcus pyogenes serotype M3 (strain ATCC BAA-595 / MGAS315).